Here is a 400-residue protein sequence, read N- to C-terminus: Enoyl-[acyl-carrier-protein] reductase [NADH] (400 aa).

Residues Gly-48 to Tyr-53, Phe-74 to Glu-75, Asp-111 to Ala-112, and Leu-139 to Ala-140 contribute to the NAD(+) site. Residue Tyr-225 coordinates substrate. Residue Tyr-235 is the Proton donor of the active site. NAD(+) is bound by residues Lys-244 and Val-273 to Thr-275.

The protein belongs to the TER reductase family. Monomer.

It catalyses the reaction a 2,3-saturated acyl-[ACP] + NAD(+) = a (2E)-enoyl-[ACP] + NADH + H(+). It functions in the pathway lipid metabolism; fatty acid biosynthesis. Its function is as follows. Involved in the final reduction of the elongation cycle of fatty acid synthesis (FAS II). Catalyzes the reduction of a carbon-carbon double bond in an enoyl moiety that is covalently linked to an acyl carrier protein (ACP). This is Enoyl-[acyl-carrier-protein] reductase [NADH] from Shewanella frigidimarina (strain NCIMB 400).